Reading from the N-terminus, the 186-residue chain is Thiol:disulfide interchange protein CycY (186 aa).

The N-terminal stretch at 1–20 (MGRYTLALLPLIVFGGIAHG) is a signal peptide. Residues 47 to 182 (DAEPAAARRA…LVPAMEKALG (136 aa)) form the Thioredoxin domain. An intrachain disulfide couples Cys-80 to Cys-83.

Belongs to the thioredoxin family. DsbE subfamily.

It localises to the periplasm. Functionally, required for disulfide bond formation in some periplasmic proteins. Also acts as a disulfide oxidoreductase in cytochromes c biogenesis. The cysteines of apocytochromes c must be in the reduced state for covalent linkage between the two moieties to occur. The chain is Thiol:disulfide interchange protein CycY (cycY) from Rhizobium leguminosarum bv. viciae.